The chain runs to 207 residues: Small ribosomal subunit protein uS4 (207 aa).

The tract at residues 31-55 (KCKLDSKPGQHGRTSGARTSDYGTQ) is disordered. Residues 42–53 (GRTSGARTSDYG) are compositionally biased toward polar residues. The region spanning 97 to 160 (SRLDNVVYRM…KKQARIVEAL (64 aa)) is the S4 RNA-binding domain.

Belongs to the universal ribosomal protein uS4 family. In terms of assembly, part of the 30S ribosomal subunit. Contacts protein S5. The interaction surface between S4 and S5 is involved in control of translational fidelity.

Its function is as follows. One of the primary rRNA binding proteins, it binds directly to 16S rRNA where it nucleates assembly of the body of the 30S subunit. In terms of biological role, with S5 and S12 plays an important role in translational accuracy. In Burkholderia ambifaria (strain ATCC BAA-244 / DSM 16087 / CCUG 44356 / LMG 19182 / AMMD) (Burkholderia cepacia (strain AMMD)), this protein is Small ribosomal subunit protein uS4.